Consider the following 404-residue polypeptide: Probable tRNA sulfurtransferase (404 aa).

The THUMP domain occupies 61-166; that stretch reads EAVSERLKDV…SGYSYIMCDE (106 aa). Residues 184–185, 209–210, Arg-266, Gly-288, and Gln-297 contribute to the ATP site; these read LL and HF.

This sequence belongs to the ThiI family.

It localises to the cytoplasm. It catalyses the reaction [ThiI sulfur-carrier protein]-S-sulfanyl-L-cysteine + a uridine in tRNA + 2 reduced [2Fe-2S]-[ferredoxin] + ATP + H(+) = [ThiI sulfur-carrier protein]-L-cysteine + a 4-thiouridine in tRNA + 2 oxidized [2Fe-2S]-[ferredoxin] + AMP + diphosphate. The catalysed reaction is [ThiS sulfur-carrier protein]-C-terminal Gly-Gly-AMP + S-sulfanyl-L-cysteinyl-[cysteine desulfurase] + AH2 = [ThiS sulfur-carrier protein]-C-terminal-Gly-aminoethanethioate + L-cysteinyl-[cysteine desulfurase] + A + AMP + 2 H(+). It functions in the pathway cofactor biosynthesis; thiamine diphosphate biosynthesis. Functionally, catalyzes the ATP-dependent transfer of a sulfur to tRNA to produce 4-thiouridine in position 8 of tRNAs, which functions as a near-UV photosensor. Also catalyzes the transfer of sulfur to the sulfur carrier protein ThiS, forming ThiS-thiocarboxylate. This is a step in the synthesis of thiazole, in the thiamine biosynthesis pathway. The sulfur is donated as persulfide by IscS. The protein is Probable tRNA sulfurtransferase of Bacillus cereus (strain ZK / E33L).